We begin with the raw amino-acid sequence, 359 residues long: Histidinol-phosphate aminotransferase (359 aa).

Lys217 is subject to N6-(pyridoxal phosphate)lysine.

The protein belongs to the class-II pyridoxal-phosphate-dependent aminotransferase family. Histidinol-phosphate aminotransferase subfamily. Homodimer. Requires pyridoxal 5'-phosphate as cofactor.

It catalyses the reaction L-histidinol phosphate + 2-oxoglutarate = 3-(imidazol-4-yl)-2-oxopropyl phosphate + L-glutamate. It functions in the pathway amino-acid biosynthesis; L-histidine biosynthesis; L-histidine from 5-phospho-alpha-D-ribose 1-diphosphate: step 7/9. The sequence is that of Histidinol-phosphate aminotransferase from Salmonella typhi.